Consider the following 231-residue polypeptide: 2,3-bisphosphoglycerate-dependent phosphoglycerate mutase (231 aa).

Residues 8-15 (RHGESEWN), 21-22 (TG), arginine 60, 87-90 (ERHY), lysine 98, 114-115 (RR), and 183-184 (GN) contribute to the substrate site. The active-site Tele-phosphohistidine intermediate is the histidine 9. Glutamate 87 functions as the Proton donor/acceptor in the catalytic mechanism.

The protein belongs to the phosphoglycerate mutase family. BPG-dependent PGAM subfamily.

The enzyme catalyses (2R)-2-phosphoglycerate = (2R)-3-phosphoglycerate. The protein operates within carbohydrate degradation; glycolysis; pyruvate from D-glyceraldehyde 3-phosphate: step 3/5. Functionally, catalyzes the interconversion of 2-phosphoglycerate and 3-phosphoglycerate. In Streptococcus equi subsp. zooepidemicus (strain H70), this protein is 2,3-bisphosphoglycerate-dependent phosphoglycerate mutase.